Here is a 100-residue protein sequence, read N- to C-terminus: Integration host factor subunit alpha (100 aa).

It belongs to the bacterial histone-like protein family. Heterodimer of an alpha and a beta chain.

This protein is one of the two subunits of integration host factor, a specific DNA-binding protein that functions in genetic recombination as well as in transcriptional and translational control. In Caulobacter sp. (strain K31), this protein is Integration host factor subunit alpha.